The primary structure comprises 472 residues: Mitochondrial substrate carrier family protein C (472 aa).

Topologically, residues 1 to 189 are mitochondrial intermembrane; it reads MVLNENDKEF…ASSLRNTITY (189 aa). EF-hand domains follow at residues 6–41, 42–70, 73–108, and 110–145; these read NDKEFVKKLFDSLDKDNNGKLTREEIKEGFFKLRIP, SSEKDIESFLTNVDKDKDGSVSFKEFEDF, ENIKKLKIVFEELDTNKSGTLDIHEIEESIKKLNIP, and YSEQELIRLFHRIDKNRDNQIDFNEWRELLVLLPNS. Residues D19, D21, N23, K25, E30, D55, D57, D59, S61, E66, D86, N88, S90, T92, E97, D123, N125, D127, Q129, and E134 each coordinate Ca(2+). 3 Solcar repeats span residues 184–268, 276–362, and 375–461; these read RNTI…VKKL, LTSA…LKHK, and GQLL…FKKA. Residues 190 to 207 form a helical membrane-spanning segment; sequence MLAGSVAGFASRTSTAPL. Residues 208-242 lie on the Mitochondrial matrix side of the membrane; the sequence is ERVKIMCQLNHGKPISLISAFKACYKDGGIKGFFR. Residues 243–263 traverse the membrane as a helical segment; the sequence is GNLANIIKVSPESAVKFGTYE. The Mitochondrial intermembrane segment spans residues 264–281; sequence YVKKLFAENDCELTSAQR. The chain crosses the membrane as a helical span at residues 282–302; the sequence is FISGSVAGVVSHTTLFPLEVV. Residues 303 to 330 lie on the Mitochondrial matrix side of the membrane; it reads RLRLSAEIAGTYNGIFDCFKKIAISEKS. Residues 331–351 traverse the membrane as a helical segment; sequence IRPFYRGLGASITATIPHSGV. Residues 352 to 377 lie on the Mitochondrial intermembrane side of the membrane; the sequence is NMMVYEFLKHKVIKMTGNEFPTAGQL. A helical membrane pass occupies residues 378–398; sequence LVCASTSSVCGQLVGYPFHVV. Residues 399 to 441 lie on the Mitochondrial matrix side of the membrane; the sequence is KSRLITQGSSVNQEKYTGLFDGLTKIIKKEGPIGLYKGIVPSF. Residues 442-462 traverse the membrane as a helical segment; sequence MKSIPSHSITFIVYEGFKKAF. The Mitochondrial intermembrane portion of the chain corresponds to 463–472; sequence DVNLKEKKHH.

The protein belongs to the mitochondrial carrier (TC 2.A.29) family.

The protein resides in the mitochondrion inner membrane. In terms of biological role, calcium-dependent mitochondrial solute carrier. Mitochondrial solute carriers shuttle metabolites, nucleotides, and cofactors through the mitochondrial inner membrane. This is Mitochondrial substrate carrier family protein C (mcfC) from Dictyostelium discoideum (Social amoeba).